Reading from the N-terminus, the 142-residue chain is Large ribosomal subunit protein uL11 (142 aa).

Belongs to the universal ribosomal protein uL11 family. Part of the ribosomal stalk of the 50S ribosomal subunit. Interacts with L10 and the large rRNA to form the base of the stalk. L10 forms an elongated spine to which L12 dimers bind in a sequential fashion forming a multimeric L10(L12)X complex. Post-translationally, one or more lysine residues are methylated.

Forms part of the ribosomal stalk which helps the ribosome interact with GTP-bound translation factors. In Vibrio vulnificus (strain CMCP6), this protein is Large ribosomal subunit protein uL11.